The sequence spans 244 residues: Sepiapterin reductase (244 aa).

NADP(+) is bound by residues 9–15 (GAGKGIG), 40–42 (SRT), 66–67 (DI), and Asn93. Position 99 (Phe99) interacts with substrate. NADP(+) is bound at residue Thr116. Substrate is bound by residues Ser145 and Tyr158. NADP(+) contacts are provided by residues Tyr158, Lys162, and 191-196 (VYTPMW). Trp196 is a substrate binding site.

This sequence belongs to the short-chain dehydrogenases/reductases (SDR) family. Homodimer.

The protein localises to the cytoplasm. It carries out the reaction L-threo-7,8-dihydrobiopterin + NADP(+) = L-sepiapterin + NADPH + H(+). It catalyses the reaction L-threo-tetrahydrobiopterin + 2 NADP(+) = 6-pyruvoyl-5,6,7,8-tetrahydropterin + 2 NADPH + 2 H(+). Slightly inhibited by N-acetyldopamine but not by N-acetylserotonin or melatonin. Functionally, catalyzes the final reductions in tetra-hydrobiopterin biosynthesis to form 5,6,7,8-tetrahydrobiopterin. This chain is Sepiapterin reductase, found in Chlorobaculum tepidum (strain ATCC 49652 / DSM 12025 / NBRC 103806 / TLS) (Chlorobium tepidum).